A 540-amino-acid chain; its full sequence is Mitochondrial antiviral-signaling protein (540 aa).

Pro2 bears the N-acetylproline mark. The Cytoplasmic portion of the chain corresponds to 2-513 (PFAEDKTYKY…REVPCHRPSP (512 aa)). Residues Lys7 and Lys10 each participate in a glycyl lysine isopeptide (Lys-Gly) (interchain with G-Cter in ubiquitin) cross-link. The CARD domain occupies 10–77 (KYICRNFSNF…WVEYFIAALR (68 aa)). The tract at residues 10–77 (KYICRNFSNF…WVEYFIAALR (68 aa)) is required for interaction with NLRX1. Cys79 is lipidated: S-palmitoyl cysteine. A disordered region spans residues 95-297 (YQPRTSDRPP…EAPANSLPSK (203 aa)). Pro residues predominate over residues 106 to 122 (PLEPPSLPAERPGPPTP). Positions 143–147 (PVQET) are interaction with TRAF2. Composition is skewed to polar residues over residues 145–165 (QETQAPESPGENSEQALQTLS) and 179–216 (ESSSDLAALSPLTSSGHQEQDTELGSTHTAGATSSLTP). Ser152, Ser157, Ser165, Ser180, and Ser188 each carry phosphoserine. The tract at residues 153–158 (PGENSE) is interaction with TRAF6. Phosphothreonine is present on Thr215. 2 positions are modified to phosphoserine: Ser222 and Ser233. Thr234 carries the phosphothreonine modification. Residue Arg236 is modified to Asymmetric dimethylarginine. Low complexity predominate over residues 241-266 (PGPTGSVVSTGTSFSSSSPGLASAGA). 2 positions are modified to phosphoserine: Ser253 and Ser258. Glycyl lysine isopeptide (Lys-Gly) (interchain with G-Cter in ubiquitin) cross-links involve residues Lys311 and Lys325. Disordered regions lie at residues 314–358 (ANPA…RAGM) and 373–419 (SAST…SELS). Polar residues-rich tracts occupy residues 317-331 (ASVSTVPSKLPTSSK), 339-355 (NALTNPAPSKLPINSTR), and 373-382 (SASTVPTDGS). Residues 388-403 (TPAAPTPAGATGGSSA) are compositionally biased toward low complexity. Ser408 bears the Phosphoserine mark. A pLxIS motif motif is present at residues 439–442 (LAIS). Ser442 is subject to Phosphoserine; by TBK1. An interaction with TRAF6 region spans residues 455–460 (PEENEY). Glycyl lysine isopeptide (Lys-Gly) (interchain with G-Cter in ubiquitin) cross-links involve residues Lys461 and Lys500. A (Microbial infection) Glycyl lysine isopeptide (Lys-Gly) (interchain with G-Cter in UFM1) cross-link involves residue Lys461. Residues 476–507 (IQLLEGNPGPPADPDGGPRPQADRKFQEREVP) are disordered. A compositionally biased stretch (basic and acidic residues) spans 496 to 507 (QADRKFQEREVP). The chain crosses the membrane as a helical span at residues 514–534 (GALWLQVAVTGVLVVTLLVVL). At 535 to 540 (YRRRLH) the chain is on the mitochondrial intermembrane side.

In terms of assembly, self-associates and polymerizes (via CARD domains) to form 400 nM long three-stranded helical filaments on mitochondria, filament nucleation requires interaction with RIGI whose CARD domains act as a template for filament assembly. Interacts with RIGI, IFIH1/MDA5, TRAF2, TRAF6 and C1QBP. May interact with FADD, RIPK1, CHUK and IKBKB. Interacts (when phosphorylated) with IRF3; following activation and phosphorylation on the pLxIS motif by TBK1, recruits IRF3. Interacts with NLRX1. Interaction with NLRX1 requires the CARD domain. Interacts with PSMA7. Interacts with TRAFD1. Interacts (via C-terminus) with PCBP2 in a complex containing MAVS/IPS1, PCBP2 and ITCH. Interacts with CYLD. Interacts with SRC. Interacts with DHX58/LGP2 and IKBKE. Interacts with STING1. Interacts with IFIT3 (via N-terminus). Interacts with TBK1 only in the presence of IFIT3. Interacts with TTLL12; the interaction prevents MAVS binding to TBK1 and IKBKE. Interacts with MUL1. Interacts with ANKRD17. Interacts with NDFIP1. Interacts with SMURF1; the interaction is mediated by NDFIP1 and leads to MAVS ubiquitination and degradation. Interacts with UBXN1; this interaction inhibits MAVS-mediated antiviral pathway. Interacts (via C-terminus) with GPATCH3; the interaction is markedly increased upon viral infection. Directly interacts (via CARD domain) with ATG5 and ATG12, either as ATG5 and ATG12 monomers or as ATG12-ATG5 conjugates. Interacts with DHX33 (via the helicase C-terminal domain). Interacts with DDX3X (via C-terminus); this interaction occurs rapidly, but transiently after Sendai virus infection. The interaction with DDX3X potentiates MAVS-mediated IFNB induction. Conversely inhibition of this interaction, for instance by HCV core protein, prevents MAVS-mediated IFNB induction. Transiently interacts with TRAF3 early during Sendai virus infection. Interacts with CLPB; the interaction is enhanced by Sendai virus infection. Interacts with TRAF3IP3. Interacts with TOMM70; the interaction is enhanced by Sendai virus infection. Interacts with ZNFX1. Interacts with N4BP3; this interaction promotes the polyubiquitination of MAVS. Interacts with TAX1BP1; this interaction induces MAVS polyubiquitination. Interacts with NLRP3; promoting NLRP3 recruitment to mitochondria and activation of the NLRP3 inflammasome. Interacts with ECSIT; this interaction bridges RIGI to the MAVS complex at the mitochondrion. Interacts with UBL7; this interaction promotes MAVS 'Lys-27'-linked ubiquitination leading to type I interferon production. Interacts (via transmembrane domain) with SMIM30/MAVI1 (via transmembrane domain); the interaction disrupts MAVS interaction with RIGI and inhibits MAVS aggregation, resulting in the repression of type I interferon signaling and innate immune responses. (Microbial infection) Interacts with hepatitis C virus (HCV) NS3/4A protease; this interaction leads to MAVS cleavage, thereby preventing the establishment of an antiviral state. As to quaternary structure, (Microbial infection) Interacts with hepatitis GB virus B NS3/4A protease; this interaction leads to MAVS cleavage. In terms of assembly, (Microbial infection) Interacts with human respiratory syncytial virus/HRSV protein NS1; this interaction disrupts MAVS binding to RIGI. (Microbial infection) Interacts with Andes virus Nnon-structural protein NS-S; this interaction may reduce MAVS ubiquitination and leads to inhibition of MAVS-induced type-I IFN signaling pathway. As to quaternary structure, (Microbial infection) Interacts with Seneca Valley virus protease 3C; this interaction allows the cleavage of MAVS and subsequent suppression of host innate immunity. In terms of assembly, (Microbial infection) Interacts with SARS-CoV virus protein ORF9b; this interaction mediates MAVS proteasomal degradation. (Microbial infection) Interacts with SARS-CoV-2 virus protein M; this interaction impairs MAVS self-association and its recruitment of downstream components. As to quaternary structure, (Microbial infection) Interacts with foot-and-mouth disease virus protein VP1; this interaction competes with TRAF3 interaction to MAVS leading to suppression of host innate immunity. In terms of assembly, (Microbial infection) Interacts with Epstein-Barr virus protein BILF1; this interaction mediates MAVS routing from mitochondria to lysosomes. Post-translationally, following activation, phosphorylated by TBK1 at Ser-442 in the pLxIS motif. The phosphorylated pLxIS motif constitutes an IRF3-binding motif, leading to recruitment of the transcription factor IRF3 to induce type-I interferons and other cytokines. In terms of processing, ubiquitinated. Undergoes 'Lys-48'-linked polyubiquitination catalyzed by ITCH; ITCH-dependent polyubiquitination is mediated by the interaction with PCBP2 and leads to MAVS/IPS1 proteasomal degradation. Ubiquitinated by RNF125, leading to its degradation by the proteasome. Undergoes 'Lys-48'-linked ubiquitination catalyzed by SMURF1. Undergoes 'Lys-48'-linked ubiquitination catalyzed by MARCHF5 at Lys-7 and Lys-500, leading to proteasomal degradation. Ubiquitinated via 'Lys-63'-linked ubiquitination at Lys-10, Lys-311 and Lys-461 by UBE2N and TRIM31, promoting MAVS polymerization and formation of three-stranded helical filaments on mitochondria. Undergoes 'Lys-63'-linked ubiquitination leading to enhanced interaction between MAVS and TRAF2. Undergoes 'Lys-27'-linked ubiquitination by TRIM21 leading to enhanced interaction between MAVS and TBK1. Deubiquitinated by USP10 leading to attenuation of RIGI-mediated MAVS aggregation and production of type I interferon. Undergoes 'Lys-48'-linked polyubiquitination catalyzed by RNF115 leading to its degradation. Palmitoylated by ZHDDC4. Palmitoylation promotes MAVS stabilization and activation by inhibiting 'Lys-48'- but facilitating 'Lys-63'-linked ubiquitination. Post-translationally, proteolytically cleaved by apoptotic caspases during apoptosis, leading to its inactivation. Cleavage by CASP3 during virus-induced apoptosis inactivates it, preventing cytokine overproduction. In terms of processing, (Microbial infection) Cleaved and degraded by hepatitis A virus (HAV) protein 3ABC allowing the virus to disrupt the activation of host IRF3 through the MDA5 pathway. (Microbial infection) Cleaved by the protease 2A of coxsackievirus B3, poliovirus and enterovirus 71 allowing the virus to disrupt the host type I interferon production. Post-translationally, (Microbial infection) Cleaved by Seneca Valley virus protease 3C allowing the virus to suppress interferon type-I production. In terms of processing, (Microbial infection) Cleaved by HCV protease NS3/4A, thereby preventing the establishment of an antiviral state. (Microbial infection) UFMylated by ULF1 in association with Epstein-Barr virus BILF1; leading to MAVS routing to the lysosome. Present in T-cells, monocytes, epithelial cells and hepatocytes (at protein level). Ubiquitously expressed, with highest levels in heart, skeletal muscle, liver, placenta and peripheral blood leukocytes.

It is found in the mitochondrion outer membrane. It localises to the mitochondrion. The protein localises to the peroxisome. In terms of biological role, adapter required for innate immune defense against viruses. Acts downstream of DHX33, RIGI and IFIH1/MDA5, which detect intracellular dsRNA produced during viral replication, to coordinate pathways leading to the activation of NF-kappa-B, IRF3 and IRF7, and to the subsequent induction of antiviral cytokines such as IFNB and RANTES (CCL5). Peroxisomal and mitochondrial MAVS act sequentially to create an antiviral cellular state. Upon viral infection, peroxisomal MAVS induces the rapid interferon-independent expression of defense factors that provide short-term protection, whereas mitochondrial MAVS activates an interferon-dependent signaling pathway with delayed kinetics, which amplifies and stabilizes the antiviral response. May activate the same pathways following detection of extracellular dsRNA by TLR3. May protect cells from apoptosis. Involved in NLRP3 inflammasome activation by mediating NLRP3 recruitment to mitochondria. The protein is Mitochondrial antiviral-signaling protein of Homo sapiens (Human).